The chain runs to 203 residues: RNA pyrophosphohydrolase (203 aa).

The Nudix hydrolase domain occupies 6-149 (GFRPNVGIIL…KRNVYQMALT (144 aa)). Positions 38–59 (GGIKHGESPEQAMFRELHEEVG) match the Nudix box motif. The disordered stretch occupies residues 170–203 (RAHRRDEGSEHNDHLDPTGPHDAGASVSEPKQAE). Over residues 173–185 (RRDEGSEHNDHLD) the composition is skewed to basic and acidic residues.

Belongs to the Nudix hydrolase family. RppH subfamily. It depends on a divalent metal cation as a cofactor.

Its function is as follows. Accelerates the degradation of transcripts by removing pyrophosphate from the 5'-end of triphosphorylated RNA, leading to a more labile monophosphorylated state that can stimulate subsequent ribonuclease cleavage. The polypeptide is RNA pyrophosphohydrolase (Leptothrix cholodnii (strain ATCC 51168 / LMG 8142 / SP-6) (Leptothrix discophora (strain SP-6))).